A 233-amino-acid polypeptide reads, in one-letter code: Large ribosomal subunit protein uL1 (233 aa).

Belongs to the universal ribosomal protein uL1 family. In terms of assembly, part of the 50S ribosomal subunit.

Functionally, binds directly to 23S rRNA. The L1 stalk is quite mobile in the ribosome, and is involved in E site tRNA release. Protein L1 is also a translational repressor protein, it controls the translation of the L11 operon by binding to its mRNA. The polypeptide is Large ribosomal subunit protein uL1 (Brucella melitensis biotype 1 (strain ATCC 23456 / CCUG 17765 / NCTC 10094 / 16M)).